Reading from the N-terminus, the 166-residue chain is Transmembrane protein 190 (166 aa).

The first 21 residues, 1 to 21 (MVGSGISALGLLLLMQGSVDA), serve as a signal peptide directing secretion. Residues 22 to 81 (NGIQGFFYPWSCEGDVWDRESCGGQAAIENPNLCLRLRCCYRDGVCYHQRPDENMRRKHM) are Extracellular-facing. The P-type domain occupies 31 to 71 (WSCEGDVWDRESCGGQAAIENPNLCLRLRCCYRDGVCYHQR). 3 disulfides stabilise this stretch: C33–C61, C43–C60, and C55–C67. A helical membrane pass occupies residues 82 to 102 (WALGWTCGSLLFLITSICLFW). Topologically, residues 103–166 (WARRQDMLHL…VSGEDTGGEE (64 aa)) are cytoplasmic. The tract at residues 130-166 (LSKDRRSANKSTTVLQSPGGEVETAAAVSGEDTGGEE) is disordered.

As to expression, detected in testis and in a mixture of spermatogenic cells at various stages (testicular germ cells). Not detected in heart, brain, spleen, lung, liver, skeletal muscle and kidney.

The protein localises to the membrane. This is Transmembrane protein 190 (Tmem190) from Mus musculus (Mouse).